The following is a 910-amino-acid chain: Dimethylsulfide dehydrogenase subunit alpha (910 aa).

Positions 1–28 form a signal peptide, tat-type signal; it reads MLRTTRRTLMQGASLVGAGLFAAGRGWA. Residues 59–123 form the 4Fe-4S Mo/W bis-MGD-type domain; sequence DYVGKAAHCI…IHSTSMYEAD (65 aa). Residues H66, C70, C74, and C109 each contribute to the [4Fe-4S] cluster site.

The protein belongs to the prokaryotic molybdopterin-containing oxidoreductase family. Heterotrimer of alpha, beta and gamma subunits. [4Fe-4S] cluster is required as a cofactor. The cofactor is Mo-bis(molybdopterin guanine dinucleotide). In terms of processing, predicted to be exported by the Tat system. The position of the signal peptide cleavage has been experimentally proven.

It is found in the periplasm. It carries out the reaction 2 Fe(III)-[cytochrome c2] + dimethyl sulfide + H2O = 2 Fe(II)-[cytochrome c2] + dimethyl sulfoxide + 2 H(+). In terms of biological role, allows photoautotrophic growth on dimethyl sulfide (DMS) as the sole electron donor. The polypeptide is Dimethylsulfide dehydrogenase subunit alpha (ddhA) (Rhodovulum sulfidophilum (Rhodobacter sulfidophilus)).